A 355-amino-acid chain; its full sequence is uncharacterized protein (355 aa).

It belongs to the carbohydrate kinase PfkB family.

This is an uncharacterized protein from Dictyostelium discoideum (Social amoeba).